Reading from the N-terminus, the 137-residue chain is Lysozyme (137 aa).

The N-terminal stretch at 1 to 20 (MSAVLVLALVLLSLTCVTDA) is a signal peptide. An I-type lysozyme domain is found at 21–134 (ISDACLTCIC…WNAVKNQGCS (114 aa)). 6 disulfides stabilise this stretch: C25-C102, C30-C37, C42-C51, C64-C84, C74-C80, and C98-C116. E33 functions as the Proton donor in the catalytic mechanism. D45 acts as the Nucleophile in catalysis. 57-63 (KKSYWID) contacts substrate. Substrate-binding positions include Y88 and 109-111 (HNG).

It belongs to the glycosyl hydrolase 22 family. Type-I lysozyme subfamily.

It is found in the secreted. The enzyme catalyses Hydrolysis of (1-&gt;4)-beta-linkages between N-acetylmuramic acid and N-acetyl-D-glucosamine residues in a peptidoglycan and between N-acetyl-D-glucosamine residues in chitodextrins.. Has bacteriolytic activity. May play a role in digestion and in the host defense mechanisms against invading microbes. This chain is Lysozyme (lysoz), found in Ostrea edulis (Native oyster).